The chain runs to 282 residues: 4-diphosphocytidyl-2-C-methyl-D-erythritol kinase (282 aa).

K8 is a catalytic residue. Position 91-101 (91-101 (PVAAGLAGGST)) interacts with ATP. The active site involves D133.

It belongs to the GHMP kinase family. IspE subfamily.

It carries out the reaction 4-CDP-2-C-methyl-D-erythritol + ATP = 4-CDP-2-C-methyl-D-erythritol 2-phosphate + ADP + H(+). It functions in the pathway isoprenoid biosynthesis; isopentenyl diphosphate biosynthesis via DXP pathway; isopentenyl diphosphate from 1-deoxy-D-xylulose 5-phosphate: step 3/6. In terms of biological role, catalyzes the phosphorylation of the position 2 hydroxy group of 4-diphosphocytidyl-2C-methyl-D-erythritol. The chain is 4-diphosphocytidyl-2-C-methyl-D-erythritol kinase from Symbiobacterium thermophilum (strain DSM 24528 / JCM 14929 / IAM 14863 / T).